We begin with the raw amino-acid sequence, 561 residues long: Long-chain-fatty-acid--CoA ligase (561 aa).

213–224 is an ATP binding site; that stretch reads YTGGTTGVAKGA.

This sequence belongs to the ATP-dependent AMP-binding enzyme family. Requires Mg(2+) as cofactor.

It is found in the membrane. The enzyme catalyses a long-chain fatty acid + ATP + CoA = a long-chain fatty acyl-CoA + AMP + diphosphate. It functions in the pathway lipid metabolism; fatty acid beta-oxidation. In terms of biological role, catalyzes the esterification, concomitant with transport, of exogenous long-chain fatty acids into metabolically active CoA thioesters for subsequent degradation or incorporation into phospholipids. The polypeptide is Long-chain-fatty-acid--CoA ligase (fadD) (Escherichia coli O6:H1 (strain CFT073 / ATCC 700928 / UPEC)).